A 621-amino-acid polypeptide reads, in one-letter code: Chaperone protein HscA homolog (621 aa).

Belongs to the heat shock protein 70 family.

In terms of biological role, chaperone involved in the maturation of iron-sulfur cluster-containing proteins. Has a low intrinsic ATPase activity which is markedly stimulated by HscB. The sequence is that of Chaperone protein HscA homolog from Polynucleobacter asymbioticus (strain DSM 18221 / CIP 109841 / QLW-P1DMWA-1) (Polynucleobacter necessarius subsp. asymbioticus).